Here is a 419-residue protein sequence, read N- to C-terminus: Serine hydroxymethyltransferase (419 aa).

Residues L121 and 125 to 127 each bind (6S)-5,6,7,8-tetrahydrofolate; that span reads GHL. The residue at position 230 (K230) is an N6-(pyridoxal phosphate)lysine. 355–357 serves as a coordination point for (6S)-5,6,7,8-tetrahydrofolate; that stretch reads SPF.

Belongs to the SHMT family. Homodimer. It depends on pyridoxal 5'-phosphate as a cofactor.

It localises to the cytoplasm. It carries out the reaction (6R)-5,10-methylene-5,6,7,8-tetrahydrofolate + glycine + H2O = (6S)-5,6,7,8-tetrahydrofolate + L-serine. The protein operates within one-carbon metabolism; tetrahydrofolate interconversion. It functions in the pathway amino-acid biosynthesis; glycine biosynthesis; glycine from L-serine: step 1/1. Its function is as follows. Catalyzes the reversible interconversion of serine and glycine with tetrahydrofolate (THF) serving as the one-carbon carrier. This reaction serves as the major source of one-carbon groups required for the biosynthesis of purines, thymidylate, methionine, and other important biomolecules. Also exhibits THF-independent aldolase activity toward beta-hydroxyamino acids, producing glycine and aldehydes, via a retro-aldol mechanism. This is Serine hydroxymethyltransferase from Streptococcus uberis (strain ATCC BAA-854 / 0140J).